The following is a 159-amino-acid chain: 2-C-methyl-D-erythritol 2,4-cyclodiphosphate synthase (159 aa).

A divalent metal cation is bound by residues Asp8 and His10. Residues 8–10 (DVH) and 34–35 (HS) contribute to the 4-CDP-2-C-methyl-D-erythritol 2-phosphate site. Residue His42 participates in a divalent metal cation binding. 4-CDP-2-C-methyl-D-erythritol 2-phosphate is bound by residues 56-58 (DIG), 61-65 (FPDTD), 132-135 (TTTE), Phe139, and Arg142.

Belongs to the IspF family. As to quaternary structure, homotrimer. A divalent metal cation serves as cofactor.

It catalyses the reaction 4-CDP-2-C-methyl-D-erythritol 2-phosphate = 2-C-methyl-D-erythritol 2,4-cyclic diphosphate + CMP. It functions in the pathway isoprenoid biosynthesis; isopentenyl diphosphate biosynthesis via DXP pathway; isopentenyl diphosphate from 1-deoxy-D-xylulose 5-phosphate: step 4/6. Functionally, involved in the biosynthesis of isopentenyl diphosphate (IPP) and dimethylallyl diphosphate (DMAPP), two major building blocks of isoprenoid compounds. Catalyzes the conversion of 4-diphosphocytidyl-2-C-methyl-D-erythritol 2-phosphate (CDP-ME2P) to 2-C-methyl-D-erythritol 2,4-cyclodiphosphate (ME-CPP) with a corresponding release of cytidine 5-monophosphate (CMP). This chain is 2-C-methyl-D-erythritol 2,4-cyclodiphosphate synthase, found in Finegoldia magna (strain ATCC 29328 / DSM 20472 / WAL 2508) (Peptostreptococcus magnus).